Here is a 557-residue protein sequence, read N- to C-terminus: Nucleoporin AMO1 (557 aa).

Residues 1–25 (MTVCRFWQQGYCRNGNACKFEHPPK) form a C3H1-type zinc finger. Residues 114 to 141 (QGALNEIQAAYQAAQQQIQNTLQNIPAA) are a coiled coil. A disordered region spans residues 161–297 (ESSKGSSTGG…SALGPKPGAF (137 aa)). SXFG repeat units lie at residues 171 to 174 (SVFG), 200 to 203 (SAFG), 213 to 216 (SAFG), 228 to 231 (SAFG), 240 to 243 (SAFG), 249 to 252 (STFG), 262 to 265 (SAFG), 282 to 285 (SAFG), 303 to 306 (SAFG), and 314 to 317 (SPFG). Residues 195 to 215 (STPSTSAFGQPSPLGQKSSAF) are compositionally biased toward polar residues. Polar residues predominate over residues 243 to 253 (GSPQTGSTFGQ). The tract at residues 315–463 (PFGAAAQATQ…DLLSYATKNP (149 aa)) is disordered. Polar residues-rich tracts occupy residues 321-338 (QATQ…QAAN) and 351-366 (GQPS…GQPS). 4 SXFG repeats span residues 348 to 351 (SAFG), 370 to 373 (SAFG), 387 to 390 (SLFG), and 407 to 410 (SAFG). The span at 367–385 (TQSSAFGQQQPQQAGTFGS) shows a compositional bias: low complexity. The segment covering 388–429 (LFGQQQQQPSNVFGQPSTTSAFGSQAATSGFSQLGNATSTIG) has biased composition (polar residues). A compositionally biased stretch (low complexity) spans 430–443 (ASPAGAQAPASKSP).

The nuclear pore complex (NPC) constitutes the exclusive means of nucleocytoplasmic transport. NPCs allow the passive diffusion of ions and small molecules and the active, nuclear transport receptor-mediated bidirectional transport of macromolecules such as proteins, RNAs, ribonucleoparticles (RNPs), and ribosomal subunits across the nuclear envelope. The 55-60 MDa NPC is composed of at least 28 different subunits: AMO1, ELYS, GLE1, GLE2, MLP1, NDC1, NIC96, NSP1, NUP133, NUP145, NUP152, NUP159, NUP170, NUP188, NUP192, NUP37, NUP49, NUP53, NUP56, NUP57, NUP82, NUP84, NUP85, POM152, POM33, POM34, SEC13 and SEH1. Due to its 8-fold rotational symmetry, all subunits are present with 8 copies or multiples thereof.

It is found in the nucleus. Its subcellular location is the nuclear pore complex. It localises to the nucleus membrane. Functions as a component of the nuclear pore complex (NPC). NPC components, collectively referred to as nucleoporins (NUPs), can play the role of both NPC structural components and of docking or interaction partners for transiently associated nuclear transport factors. Active directional transport is assured by both, a Phe-Gly (FG) repeat affinity gradient for these transport factors across the NPC and a transport cofactor concentration gradient across the nuclear envelope (GSP1 and GSP2 GTPases associated predominantly with GTP in the nucleus, with GDP in the cytoplasm). AMO1 is specifically important for nuclear protein and mRNA export. In Chaetomium thermophilum (strain DSM 1495 / CBS 144.50 / IMI 039719) (Thermochaetoides thermophila), this protein is Nucleoporin AMO1 (AMO1).